Consider the following 435-residue polypeptide: Tol-Pal system protein TolB (435 aa).

Residues 1–20 form the signal peptide; that stretch reads MRKIIAGVFIFVFLISNLYA.

The protein belongs to the TolB family. In terms of assembly, the Tol-Pal system is composed of five core proteins: the inner membrane proteins TolA, TolQ and TolR, the periplasmic protein TolB and the outer membrane protein Pal. They form a network linking the inner and outer membranes and the peptidoglycan layer.

It localises to the periplasm. In terms of biological role, part of the Tol-Pal system, which plays a role in outer membrane invagination during cell division and is important for maintaining outer membrane integrity. This Francisella tularensis subsp. holarctica (strain LVS) protein is Tol-Pal system protein TolB.